The following is a 371-amino-acid chain: Queuine tRNA-ribosyltransferase (371 aa).

Catalysis depends on aspartate 90, which acts as the Proton acceptor. Substrate is bound by residues 90–94 (DSGGF), aspartate 144, glutamine 188, and glycine 215. The segment at 246 to 252 (GVGTPED) is RNA binding. The active-site Nucleophile is the aspartate 265. The segment at 270-274 (TRNAR) is RNA binding; important for wobble base 34 recognition. 4 residues coordinate Zn(2+): cysteine 303, cysteine 305, cysteine 308, and histidine 334.

It belongs to the queuine tRNA-ribosyltransferase family. In terms of assembly, homodimer. Within each dimer, one monomer is responsible for RNA recognition and catalysis, while the other monomer binds to the replacement base PreQ1. The cofactor is Zn(2+).

The enzyme catalyses 7-aminomethyl-7-carbaguanine + guanosine(34) in tRNA = 7-aminomethyl-7-carbaguanosine(34) in tRNA + guanine. Its pathway is tRNA modification; tRNA-queuosine biosynthesis. Catalyzes the base-exchange of a guanine (G) residue with the queuine precursor 7-aminomethyl-7-deazaguanine (PreQ1) at position 34 (anticodon wobble position) in tRNAs with GU(N) anticodons (tRNA-Asp, -Asn, -His and -Tyr). Catalysis occurs through a double-displacement mechanism. The nucleophile active site attacks the C1' of nucleotide 34 to detach the guanine base from the RNA, forming a covalent enzyme-RNA intermediate. The proton acceptor active site deprotonates the incoming PreQ1, allowing a nucleophilic attack on the C1' of the ribose to form the product. After dissociation, two additional enzymatic reactions on the tRNA convert PreQ1 to queuine (Q), resulting in the hypermodified nucleoside queuosine (7-(((4,5-cis-dihydroxy-2-cyclopenten-1-yl)amino)methyl)-7-deazaguanosine). The chain is Queuine tRNA-ribosyltransferase from Neisseria meningitidis serogroup A / serotype 4A (strain DSM 15465 / Z2491).